The sequence spans 473 residues: NADH-quinone oxidoreductase subunit N (473 aa).

14 helical membrane passes run 3–23 (LHYLPAIIISIAILVLLLVIA), 30–50 (LAFYITGTGLCIACVSQCSLL), 62–82 (FSSMSGVLSVLLLGILIFLWL), 99–119 (FYLLLLLASLGALGMIVSEHF), 120–140 (ASFFLTLELMSLSFVGLIAYS), 153–173 (YLILSAVASAFMLMGIAIVYL), 195–215 (MLFTAGLIFILIGLLFKLSLV), 230–252 (LPTTALLSTVSKLASFVVLWKLF), 262–282 (IVLTLIGVVAVASMLIGNLLA), 291–311 (ILAFSSISHFGYLLILLFLFN), 326–346 (ALLFYLSAYLITLTGAFSILM), 368–388 (AASLSIVMLSLAGIPLTLGFM), 408–428 (FLVIASVIGLFFYLRVIMVML), and 444–464 (VASLWFIILLIMGLGTFPALF).

It belongs to the complex I subunit 2 family. As to quaternary structure, NDH-1 is composed of 13 different subunits. Subunits NuoA, H, J, K, L, M, N constitute the membrane sector of the complex.

Its subcellular location is the cell inner membrane. It carries out the reaction a quinone + NADH + 5 H(+)(in) = a quinol + NAD(+) + 4 H(+)(out). NDH-1 shuttles electrons from NADH, via FMN and iron-sulfur (Fe-S) centers, to quinones in the respiratory chain. The immediate electron acceptor for the enzyme in this species is believed to be ubiquinone. Couples the redox reaction to proton translocation (for every two electrons transferred, four hydrogen ions are translocated across the cytoplasmic membrane), and thus conserves the redox energy in a proton gradient. The sequence is that of NADH-quinone oxidoreductase subunit N from Shewanella woodyi (strain ATCC 51908 / MS32).